We begin with the raw amino-acid sequence, 247 residues long: MRVKCTIAYDGHLFNGYQVQPGKRTVQSELEKALAVIHKTDGRVPVYSSGRTDSDVHAAGQVIHFDTPLSIPGEKWPFALNALLPDDIAVKTAEIADDGFHARFSAVQKEYRYFVYTEKHPDVFKRHYAYHFAYPLNVQKMREASRHLVGTHDFTSFCAADTAVQDKVRTIYELDWTETVDGLQMRITGNGFLYNMVRIIAGTLLDTGAGKFSPDDVKAMLEAKDREAAGRTAPGHGLYLWSVCYDN.

Asp-53 (nucleophile) is an active-site residue. Tyr-111 serves as a coordination point for substrate.

It belongs to the tRNA pseudouridine synthase TruA family. In terms of assembly, homodimer.

The enzyme catalyses uridine(38/39/40) in tRNA = pseudouridine(38/39/40) in tRNA. In terms of biological role, formation of pseudouridine at positions 38, 39 and 40 in the anticodon stem and loop of transfer RNAs. This Bacillus velezensis (strain DSM 23117 / BGSC 10A6 / LMG 26770 / FZB42) (Bacillus amyloliquefaciens subsp. plantarum) protein is tRNA pseudouridine synthase A.